The primary structure comprises 149 residues: Deoxyuridine 5'-triphosphate nucleotidohydrolase (149 aa).

Residues 68 to 70 (RSG), Asn81, 85 to 87 (LID), and Met95 contribute to the substrate site.

The protein belongs to the dUTPase family. It depends on Mg(2+) as a cofactor.

It carries out the reaction dUTP + H2O = dUMP + diphosphate + H(+). It functions in the pathway pyrimidine metabolism; dUMP biosynthesis; dUMP from dCTP (dUTP route): step 2/2. In terms of biological role, this enzyme is involved in nucleotide metabolism: it produces dUMP, the immediate precursor of thymidine nucleotides and it decreases the intracellular concentration of dUTP so that uracil cannot be incorporated into DNA. This chain is Deoxyuridine 5'-triphosphate nucleotidohydrolase, found in Bordetella bronchiseptica (strain ATCC BAA-588 / NCTC 13252 / RB50) (Alcaligenes bronchisepticus).